The chain runs to 190 residues: Xanthine phosphoribosyltransferase 2 (190 aa).

Positions 20 and 27 each coordinate xanthine. 129–133 (ANGCA) contributes to the 5-phospho-alpha-D-ribose 1-diphosphate binding site. Lys-157 is a xanthine binding site.

This sequence belongs to the purine/pyrimidine phosphoribosyltransferase family. Xpt subfamily. As to quaternary structure, homodimer.

The protein resides in the cytoplasm. The catalysed reaction is XMP + diphosphate = xanthine + 5-phospho-alpha-D-ribose 1-diphosphate. It functions in the pathway purine metabolism; XMP biosynthesis via salvage pathway; XMP from xanthine: step 1/1. In terms of biological role, converts the preformed base xanthine, a product of nucleic acid breakdown, to xanthosine 5'-monophosphate (XMP), so it can be reused for RNA or DNA synthesis. In Clostridium botulinum (strain Langeland / NCTC 10281 / Type F), this protein is Xanthine phosphoribosyltransferase 2.